The primary structure comprises 447 residues: tRNA (guanine(37)-N(1))-methyltransferase (447 aa).

S-adenosyl-L-methionine contacts are provided by residues histidine 241, 285–286 (DL), and 313–314 (DV).

It belongs to the class I-like SAM-binding methyltransferase superfamily. TRM5/TYW2 family. Monomer.

The protein localises to the mitochondrion matrix. The protein resides in the nucleus. It is found in the cytoplasm. The catalysed reaction is guanosine(37) in tRNA + S-adenosyl-L-methionine = N(1)-methylguanosine(37) in tRNA + S-adenosyl-L-homocysteine + H(+). In terms of biological role, specifically methylates the N1 position of guanosine-37 in various cytoplasmic and mitochondrial tRNAs. Methylation is not dependent on the nature of the nucleoside 5' of the target nucleoside. This is the first step in the biosynthesis of wybutosine (yW), a modified base adjacent to the anticodon of tRNAs and required for accurate decoding. In Giardia intestinalis (strain ATCC 50803 / WB clone C6) (Giardia lamblia), this protein is tRNA (guanine(37)-N(1))-methyltransferase.